A 381-amino-acid polypeptide reads, in one-letter code: Cytochrome b (381 aa).

Helical transmembrane passes span 34-54, 78-99, 114-134, and 179-199; these read FGSL…FLAM, WLIR…YLHI, WNIG…GYVL, and FFAF…IHLL. Heme b is bound by residues His-84 and His-98. Residues His-183 and His-197 each coordinate heme b. His-202 serves as a coordination point for a ubiquinone. 4 helical membrane-spanning segments follow: residues 227–247, 289–309, 321–341, and 348–368; these read YKDL…ALFM, LGGV…PLLH, LTQI…WIGG, and FITV…IIMP.

It belongs to the cytochrome b family. The cytochrome bc1 complex contains 3 respiratory subunits (MT-CYB, CYC1 and UQCRFS1), 2 core proteins (UQCRC1 and UQCRC2) and probably 6 low-molecular weight proteins. Requires heme b as cofactor.

The protein localises to the mitochondrion inner membrane. Functionally, component of the ubiquinol-cytochrome c reductase complex (complex III or cytochrome b-c1 complex) that is part of the mitochondrial respiratory chain. The b-c1 complex mediates electron transfer from ubiquinol to cytochrome c. Contributes to the generation of a proton gradient across the mitochondrial membrane that is then used for ATP synthesis. The sequence is that of Cytochrome b (mt-cyb) from Sphyrna tiburo tiburo (Hammerhead shark).